The primary structure comprises 182 residues: Nucleosome assembly protein 1-like 5 (182 aa).

The interval 1–71 (MADSENQGPA…APKPKNDFIE (71 aa)) is disordered. 2 stretches are compositionally biased toward low complexity: residues 7–21 (QGPA…AAEA) and 28–49 (AEGG…SAAG). A coiled-coil region spans residues 81–107 (VLALKKLQKRCDKIEAKFDKEFQALEK). Residues 134–182 (LEGEEEEEEEYEDDEEEGEDEEEEEAAAEAAAGAKHDDAHAEMPDDAKK) form a disordered region. A compositionally biased stretch (acidic residues) spans 135–160 (EGEEEEEEEYEDDEEEGEDEEEEEAA). The segment covering 167–182 (AKHDDAHAEMPDDAKK) has biased composition (basic and acidic residues).

The protein belongs to the nucleosome assembly protein (NAP) family. In terms of tissue distribution, predominantly expressed in brain.

It localises to the nucleus. In Homo sapiens (Human), this protein is Nucleosome assembly protein 1-like 5 (NAP1L5).